The sequence spans 134 residues: DNA-binding protein H-NS, plasmid (134 aa).

The stretch at Leu23 to Glu67 forms a coiled coil. Residues Ser77 to Lys96 form a disordered region. Residues Gln112–Lys117 mediate DNA binding.

The protein belongs to the histone-like protein H-NS family. Homodimer that oligomerizes on DNA into higher-order complexes that form bridges between disparate regions of DNA compacting it. Interacts with Hha, YdgT and StpA.

The protein localises to the cytoplasm. It localises to the nucleoid. Functionally, a DNA-binding protein implicated in transcriptional repression and chromosome organization and compaction. Binds DNA, modifying gene expression, especially non-core genes. Does not regulate the same set of genes as its chromosomal counterpart (tested in S.typhimurium strain SL1344 / SV5015, chromosomal H-NS protein is AC A0A0H3NBY9). Thus it has a not-completely overlapping set of gene targets compared to its chromosomal homolog; many of these target genes are either plasmid-encoded or acquired by horizontally transferred genes (HTG). This protein can function in the absence of H-NS-modulating protein Hha (either chromosomal or plasmid-encoded), although many HTG genes are regulated by an H-NS/Hha complex. Binds nucleation sites in AT-rich DNA and bridges them, forming higher-order nucleoprotein complexes and condensing the chromosome. A subset of genes are repressed by H-NS in association with Hha and/or Cnu (ydgT). This is DNA-binding protein H-NS, plasmid (hns) from Salmonella typhi.